The chain runs to 110 residues: Keratin, type II cytoskeletal 8 (110 aa).

Positions 1-12 (MSTSGPRAFSSR) are head. The IF rod domain maps to 1 to 110 (MSTSGPRAFS…LDIEIATYRK (110 aa)). Phosphoserine is present on residues serine 2, serine 4, serine 10, and serine 11. Arginine 12 carries the omega-N-methylarginine modification. The tract at residues 13-25 (FASFIDKVRWSLL) is coil 1A. The segment at 26–39 (QQQKSNMDNMFESY) is linker 1. Lysine 29 is covalently cross-linked (Glycyl lysine isopeptide (Lys-Gly) (interchain with G-Cter in SUMO2)). Residues 40–79 (INNLRDVDEAYMNKVELESRLEGLTDEINFLRQIHEEEIR) are coil 1B. The residue at position 53 (lysine 53) is an N6-acetyllysine. Residues serine 80 and serine 85 each carry the phosphoserine modification. Positions 80–86 (SLDMDSI) are linker 12. The tract at residues 87–110 (IAEVRHGDDLRRLALDIEIATYRK) is coil 2. Residues 88–99 (AEVRHGDDLRRL) are necessary for interaction with PNN. Lysine 110 is covalently cross-linked (Glycyl lysine isopeptide (Lys-Gly) (interchain with G-Cter in SUMO2)).

This sequence belongs to the intermediate filament family. As to quaternary structure, heterotetramer of two type I and two type II keratins. Forms a heterodimer with KRT18. Associates with KRT20. Interacts with PNN. When associated with KRT19, interacts with DMD. Interacts with TCHP. Interacts with APEX1. Interacts with GPER1. Interacts with EPPK1. Interacts with PKP1 and PKP2. In terms of processing, O-glycosylated. O-GlcNAcylation at multiple sites increases solubility, and decreases stability by inducing proteasomal degradation. Post-translationally, O-glycosylated (O-GlcNAcylated), in a cell cycle-dependent manner.

It is found in the cytoplasm. The protein localises to the nucleus. It localises to the nucleoplasm. The protein resides in the nucleus matrix. Its function is as follows. Together with KRT19, helps to link the contractile apparatus to dystrophin at the costameres of striated muscle. The chain is Keratin, type II cytoskeletal 8 from Mesocricetus auratus (Golden hamster).